Here is a 539-residue protein sequence, read N- to C-terminus: MAANNLSYTIAPLEHTPLDEIAAKVDLVRKTFRSGRTKDMEFRMKQIRKLYWAIVDNTELMQDALIKDLRKCKYEAVLAEIDWCKQECIDMVNNMEKWLRDEPVPNVPLQFRAMKHRTRFEPLGVVLNIGSFNFPFQLNLPVVIGAIACGNCVVLKASESSPNCAMVLKKIFDESLDPECFTYVNGALPETQLLLEQKFDKICFTGGKAVGKIIAQKAAETLTPVLLELGGLNPAFVTKHANLKLAARRLLWQKSLNAGQVCMSHNYILVERSVLSQFLGELNNQMRTFFPQGAKNSPDLCRIVNAGHFNRLKKMLDGTNGKIVLGGSMDESTLFMEPTAVLVDDINDSMMTQEAFGPIFAMMAVDSLDQAIDIANTVDPTPLSLSAFGSKAENNKILDNVTSGGATCNDAFFHSQIPQSPLGGVGQSGMGNYHGIYSIRTFSHQRTIAEVPYWADFLFRVRYMPYQWPVMNRMKAVADSKPNFDRNGNKTKGITYFLALVLGLGSKKSKGALLRWAVLVVAAAILEAKKGVLSQLLTR.

Catalysis depends on residues Glu-228 and Cys-262.

The protein belongs to the aldehyde dehydrogenase family.

The enzyme catalyses 4'-apo-beta-carotenal + NAD(+) + H2O = neurosporaxanthin + NADH + 2 H(+). Its function is as follows. Beta-apo-4'-carotenal oxygenase involved in the last step of synthesis of neurosporaxanthin, a carboxylic apocarotenoid acting as an essential protective pigments and leading to orange pigmentation. Converts the aldehyde beta-apo-4'-carotenal into neurosporaxanthin. Is also able to use shorter apocarotenals as substrates (such as beta-apo-8'-carotenal (C30), beta-apo-10'-carotenal (C27), or the acyclic apocarotenal apo-8'-lycopenal (C30)), indicating wide substrate specificity. Neurosporaxanthin is synthesized from geranyl-geranyl pyrophosphate (GGPP) through several enzymatic activities. Phytoene synthase activity performed by the bifunctional enzyme carAR first produces phytoene from geranyl-geranyl pyrophosphate (GGPP). The phytoene dehydrogenase carB then introduces 4 desaturations to lead to lycopene which is substrate of the carotene cyclase activity of carAR that leads to the production of gamma-carotene. CarB then performs a 5th desaturation reaction to yield torulene. Torulene is the substrate of the dioxidase carT that breaks the molecule, removing five carbon atoms to yield beta-apo-4'-carotenal, whereas the aldehyde dehydrogenase carD mediates the last step by converting beta-apo-4'-carotenal into neurosporaxanthin. In Gibberella fujikuroi (strain CBS 195.34 / IMI 58289 / NRRL A-6831) (Bakanae and foot rot disease fungus), this protein is Beta-apo-4'-carotenal oxygenase.